A 96-amino-acid polypeptide reads, in one-letter code: Growth-regulated alpha protein (96 aa).

The N-terminal stretch at 1–24 (MVSATRSLLCAALPVLATSRQATG) is a signal peptide. Cystine bridges form between cysteine 33–cysteine 59 and cysteine 35–cysteine 75.

The protein belongs to the intercrine alpha (chemokine CxC) family. In terms of assembly, monomer and homodimer. At least expressed in the lung and trachea.

The protein resides in the secreted. Has chemotactic activity for neutrophils. Contributes to neutrophil activation during inflammation. The protein is Growth-regulated alpha protein (Cxcl1) of Rattus norvegicus (Rat).